A 545-amino-acid chain; its full sequence is Cleavage and polyadenylation specificity factor subunit 6 (545 aa).

Positions 37–69 (ISPSANNGDAPEDRDYLDSLPAPGGNEGSKGAP) are disordered. Positions 81-161 (IALYIGNLTW…QNPIVTPCNK (81 aa)) constitute an RRM domain. A compositionally biased stretch (polar residues) spans 165–180 (SQFEMQSRKSTQSGQM). 2 disordered regions span residues 165-404 (SQFE…PLSE) and 478-545 (YGSV…YRHR). A compositionally biased stretch (gly residues) spans 184–200 (GKAGPPGSGSRGGGFPP). 4 stretches are compositionally biased toward pro residues: residues 220-230 (PVGPGGPPPHF), 237-265 (PRLP…PLGG), 287-363 (PMGP…PPGN), and 372-383 (GPPPGDPYGRPP). 2 stretches are compositionally biased toward basic and acidic residues: residues 384-397 (PYDR…DMDA) and 483-497 (GRRE…SRSR). Over residues 498–508 (EKSRRHKSRSR) the composition is skewed to basic residues. The span at 509 to 545 (DRHEDYYRERSRERDRHRERDRDRERDREREREYRHR) shows a compositional bias: basic and acidic residues.

The protein belongs to the RRM CPSF6/7 family. As to quaternary structure, component of the cleavage factor Im (CFIm) complex.

The protein localises to the nucleus. It is found in the nucleoplasm. It localises to the nucleus speckle. The protein resides in the cytoplasm. Its function is as follows. Component of the cleavage factor Im (CFIm) complex that functions as an activator of the pre-mRNA 3'-end cleavage and polyadenylation processing required for the maturation of pre-mRNA into functional mRNAs. CFIm contributes to the recruitment of multiprotein complexes on specific sequences on the pre-mRNA 3'-end, so called cleavage and polyadenylation signals (pA signals). Most pre-mRNAs contain multiple pA signals, resulting in alternative cleavage and polyadenylation (APA) producing mRNAs with variable 3'-end formation. The CFIm complex acts as a key regulator of cleavage and polyadenylation site choice during APA through its binding to 5'-UGUA-3' elements localized in the 3'-untranslated region (UTR) for a huge number of pre-mRNAs. Plays a role in mRNA export. This is Cleavage and polyadenylation specificity factor subunit 6 from Danio rerio (Zebrafish).